The following is a 352-amino-acid chain: Protein pelota homolog (352 aa).

Belongs to the eukaryotic release factor 1 family. Pelota subfamily. In terms of assembly, monomer. A divalent metal cation serves as cofactor.

It localises to the cytoplasm. May function in recognizing stalled ribosomes, interact with stem-loop structures in stalled mRNA molecules, and effect endonucleolytic cleavage of the mRNA. May play a role in the release non-functional ribosomes and degradation of damaged mRNAs. Has endoribonuclease activity. This chain is Protein pelota homolog, found in Thermofilum pendens (strain DSM 2475 / Hrk 5).